A 189-amino-acid polypeptide reads, in one-letter code: Large ribosomal subunit protein bL9 (189 aa).

This sequence belongs to the bacterial ribosomal protein bL9 family.

Its function is as follows. Binds to the 23S rRNA. The chain is Large ribosomal subunit protein bL9 from Brucella ovis (strain ATCC 25840 / 63/290 / NCTC 10512).